The following is a 173-amino-acid chain: Microfibrillar-associated protein 5 (173 aa).

The first 21 residues, 1-21, serve as a signal peptide directing secretion; that stretch reads MSLLGPKVLLFLAAFIITSDW. The Cell attachment site signature appears at 30–32; the sequence is RGD. A glycan (O-linked (GalNAc...) threonine) is linked at Thr54. Asn79 carries an N-linked (GlcNAc...) asparagine glycan.

Belongs to the MFAP family. As to quaternary structure, interacts with TGFB2. Interacts with BMP2. Interacts with FBN1 (via N-terminal domain) and FBN2. In terms of processing, forms intermolecular disulfide bonds either with other MAGP-2 molecules or with other components of the microfibrils. N- and O-glycosylated. O-glycosylated with core 1 or possibly core 8 glycans. O-glycan heterogeneity at Thr-54: HexHexNAc (major) and HexHexNAc + sulfate (minor).

It is found in the secreted. The protein localises to the extracellular space. It localises to the extracellular matrix. Functionally, may play a role in hematopoiesis. In the cardiovascular system, could regulate growth factors or participate in cell signaling in maintaining large vessel integrity. Component of the elastin-associated microfibrils. In Homo sapiens (Human), this protein is Microfibrillar-associated protein 5 (MFAP5).